Consider the following 180-residue polypeptide: Nudix hydrolase 16, mitochondrial (180 aa).

Residues 18–162 (GSRLVAGCIP…WMKDALVEGF (145 aa)) enclose the Nudix hydrolase domain. Phe60 contacts substrate. The Mn(2+) site is built by Gly63, Glu78, Glu82, and Glu144. A Nudix box motif is present at residues 63 to 84 (GGWENDETVREAAAREAVEEAG).

Belongs to the Nudix hydrolase family. The cofactor is Mg(2+). It depends on Mn(2+) as a cofactor. In terms of tissue distribution, expressed in roots, leaves, stems and inflorescences.

The protein localises to the mitochondrion. Functionally, probably mediates the hydrolysis of some nucleoside diphosphate derivatives. The polypeptide is Nudix hydrolase 16, mitochondrial (NUDT16) (Arabidopsis thaliana (Mouse-ear cress)).